The primary structure comprises 196 residues: Transmembrane protein 126A (196 aa).

Over 1–34 the chain is Mitochondrial matrix; it reads MENHKSNNTKENITIVDISRKINQLPEAERNLLE. The chain crosses the membrane as a helical span at residues 35–55; it reads HGSVYVGLNAALCGLIANSLF. Over 56-57 the chain is Mitochondrial intermembrane; that stretch reads RR. A helical membrane pass occupies residues 58-78; the sequence is ILNVTKARIAAGLPMAWIPFL. Residues 79–107 are Mitochondrial matrix-facing; it reads TTDITYRCFVSFPLNTGDLDCETCTITRS. Residues 108–128 form a helical membrane-spanning segment; it reads GLIGLVIGGLYPVFLAIPVNG. Residues 129–159 are Mitochondrial intermembrane-facing; that stretch reads GLAARYQSALLPHKGNILSYWIRTSKPVFRK. Residues 160 to 176 traverse the membrane as a helical segment; that stretch reads MLFPIMLQTMFSAYLGS. Over 177 to 196 the chain is Mitochondrial matrix; sequence EQYKLLIKALQLSEPGKEIH.

Belongs to the TMEM126 family. Interacts with OXA1L; promoting cotranslational quality control in mitochondria.

Its subcellular location is the mitochondrion inner membrane. Functionally, protein required for the cotranslational protein quality control in the inner membrane of the mitochondria. Associates with newly synthesized polypeptides and may act as a chaperone that cooperates with OXA1L for the insertion of newly synthesized mitochondrial proteins into the inner membrane. Required for the assembly of the ND4 module of mitochondrial complex I. The polypeptide is Transmembrane protein 126A (TMEM126A) (Pongo abelii (Sumatran orangutan)).